The primary structure comprises 1047 residues: uncharacterized protein (1047 aa).

Lysine 17 bears the N6-acetyllysine mark. 2 disordered regions span residues proline 172–serine 208 and arginine 236–leucine 283. Residue serine 208 is modified to Phosphoserine. Residues asparagine 237–alanine 254 are compositionally biased toward polar residues. A compositionally biased stretch (pro residues) spans histidine 268–leucine 283. Serine 299 and serine 391 each carry phosphoserine. Threonine 397 is subject to Phosphothreonine. Disordered regions lie at residues glutamate 448–valine 469, glutamate 482–aspartate 504, proline 519–serine 567, proline 668–glycine 690, valine 714–leucine 763, glutamate 931–alanine 1004, and proline 1021–leucine 1047. Phosphoserine is present on residues serine 455, serine 496, and serine 497. Composition is skewed to low complexity over residues proline 729 to proline 741 and proline 751 to serine 762. Phosphoserine is present on residues serine 936, serine 956, serine 988, and serine 996. Residues alanine 978–serine 996 are compositionally biased toward low complexity.

This is an uncharacterized protein from Homo sapiens (Human).